Here is a 276-residue protein sequence, read N- to C-terminus: Pantothenate synthetase (276 aa).

27 to 34 (MGNLHDGH) provides a ligand contact to ATP. His34 serves as the catalytic Proton donor. Gln58 contacts (R)-pantoate. Residue Gln58 participates in beta-alanine binding. Position 145–148 (145–148 (GKKD)) interacts with ATP. (R)-pantoate is bound at residue Gln151. ATP is bound by residues Ile174 and 182 to 185 (LSSR).

It belongs to the pantothenate synthetase family. As to quaternary structure, homodimer.

Its subcellular location is the cytoplasm. The catalysed reaction is (R)-pantoate + beta-alanine + ATP = (R)-pantothenate + AMP + diphosphate + H(+). It functions in the pathway cofactor biosynthesis; (R)-pantothenate biosynthesis; (R)-pantothenate from (R)-pantoate and beta-alanine: step 1/1. Functionally, catalyzes the condensation of pantoate with beta-alanine in an ATP-dependent reaction via a pantoyl-adenylate intermediate. This chain is Pantothenate synthetase, found in Aromatoleum aromaticum (strain DSM 19018 / LMG 30748 / EbN1) (Azoarcus sp. (strain EbN1)).